The primary structure comprises 131 residues: Large-conductance mechanosensitive channel (131 aa).

Helical transmembrane passes span 8 to 28 (FAIR…GAFG), 30 to 50 (IVSS…LGGI), and 67 to 87 (GAFI…FLFV).

This sequence belongs to the MscL family. In terms of assembly, homopentamer.

The protein resides in the cell membrane. Its function is as follows. Channel that opens in response to stretch forces in the membrane lipid bilayer. May participate in the regulation of osmotic pressure changes within the cell. The polypeptide is Large-conductance mechanosensitive channel (Geobacillus thermodenitrificans (strain NG80-2)).